A 195-amino-acid polypeptide reads, in one-letter code: Interferon omega-2 (195 aa).

A signal peptide spans 1-23 (MALLPSLLTALVVYELWPCGALG). 2 disulfide bridges follow: cysteine 24–cysteine 122 and cysteine 52–cysteine 162. An N-linked (GlcNAc...) asparagine glycan is attached at asparagine 101.

It belongs to the alpha/beta interferon family.

Its subcellular location is the secreted. In Equus caballus (Horse), this protein is Interferon omega-2.